Consider the following 323-residue polypeptide: Prostaglandin F synthase 1 (323 aa).

NADP(+) contacts are provided by residues 20-24 (GFGTY) and Asp50. Tyr55 functions as the Proton donor in the catalytic mechanism. Substrate is bound at residue His117. NADP(+)-binding positions include 166–167 (SN), Gln190, 216–221 (YAALGA), and 270–280 (KSFNKKRIKEN).

The protein belongs to the aldo/keto reductase family. Monomer. The N-terminus is blocked.

It is found in the cytoplasm. It carries out the reaction prostaglandin F2alpha + NADP(+) = prostaglandin D2 + NADPH + H(+). It functions in the pathway lipid metabolism; prostaglandin biosynthesis. Functionally, catalyzes the reduction of PGD(2) and PGH(2) to PGF(2 alpha) and a stereoisomer, respectively. It has a broad substrate specificity and also reduces other carbonyl compounds. The chain is Prostaglandin F synthase 1 from Bos taurus (Bovine).